The primary structure comprises 297 residues: Probable DNA polymerase III subunit delta (297 aa).

It belongs to the DNA polymerase HolA subunit family. Component of the DNA clamp loading complex consisting of tau(3):delta(1):delta'(1). The DNA polymerase III holoenzyme complex contains at least 10 different subunits organized into 3 functionally essential subassemblies: the Pol III core, the beta sliding clamp processivity factor and the clamp-loading complex. The Pol III core (subunits alpha, epsilon and theta) contains the polymerase and the 3'-5' exonuclease proofreading activities. The polymerase is tethered to the template via the dimeric beta sliding clamp processivity factor. The DNA clamp-loading complex assembles the beta sliding clamp onto the primed template and plays a central role in the organization and communication at the replication fork.

It carries out the reaction DNA(n) + a 2'-deoxyribonucleoside 5'-triphosphate = DNA(n+1) + diphosphate. Part of the beta sliding clamp loading complex, which hydrolyzes ATP to load the beta clamp onto primed DNA to form the DNA replication pre-initiation complex. DNA polymerase III is a complex, multichain enzyme responsible for most of the replicative synthesis in bacteria. This DNA polymerase also exhibits 3'-5' exonuclease activity. The delta subunit is the wrench that will open the beta subunit dimer. The DNA clamp loading complex (tau(3),delta,delta') is thought to load beta dimers onto DNA by binding ATP which alters the complex's conformation so it can bind beta sliding clamp dimers and open them at one interface. Primed DNA is recognized, ATP is hydrolyzed releasing the clamp loading complex and closing the beta sliding clamp ring around the primed DNA. In Mycoplasma genitalium (strain ATCC 33530 / DSM 19775 / NCTC 10195 / G37) (Mycoplasmoides genitalium), this protein is Probable DNA polymerase III subunit delta.